Here is a 629-residue protein sequence, read N- to C-terminus: MDKSMIKKRGRPPITKDYPNPLQSPMAHSSMQVQKQGPHSFAKPLMKVGQSSPSPNKRRLSIDHHHNLAATTRKGRYRGVLLSTPTKKSSTNGSTPISTPSSNDSYNNTVFSETRKTFLQSSPPIMTSSPAFQKKNDYMFPSQEQFKLSLTITESGKAVIAGSLPFSPSSKSSHLMNNNNKKIMQNEKIHKGSKKNAPKFEKRRILSLLKQMKNEKYCDTDTLPEAPPAKPSRSDIIDTELPTIIETSASPIGSARNNNILLSQPPQSPPSSAQLKPPSTPKSSLQFRMGFTPNVALNSVSLSDTISKSTNAVGASNNNNQNGNSISNIADANTLLTLTNSPGVFLSPRNKMLPKSTTASNEQQQEFVFKFSSGDPLLLTDDADGNWPEMLFNVSNTPRRQKCFNTPPSWINFGSPGLFSPPRSSNVMVNGTTVATASDSGNVHRQLQAQLEAQVQVQSQSNSPTQRQQQQRQFQIPPPHINMNSSPPQINIASPPHQSMSRVSSIYFNKEKTTTGVANMLGNTKSENLQPPANLFTAAHGPSTPRNQEFQLPTLIECTPLIQQTMNGSLGTKYIPGTSISNSATPNLHGFPVGTGKAPSSFDDSLKQNPYSNKQDDARTALKRLIDDQ.

Basic residues predominate over residues 1 to 11; sequence MDKSMIKKRGR. Disordered stretches follow at residues 1 to 60, 83 to 106, 217 to 286, 455 to 485, and 586 to 629; these read MDKS…KRRL, STPT…NDSY, YCDT…SSLQ, VQVQ…NMNS, and PNLH…IDDQ. Over residues 21 to 37 the composition is skewed to polar residues; sequence PLQSPMAHSSMQVQKQG. Residues 245 to 260 are compositionally biased toward polar residues; the sequence is IETSASPIGSARNNNI. 2 stretches are compositionally biased toward low complexity: residues 261–277 and 455–475; these read LLSQ…QLKP and VQVQ…RQFQ. Ser268 is subject to Phosphoserine. Residues 614 to 629 are compositionally biased toward basic and acidic residues; the sequence is KQDDARTALKRLIDDQ.

In terms of assembly, interacts with transcription complexes SCB-binding factor (SBF) and MCB-binding factor (MBF) at their target promoters. Interacts with MBP1 and SWI6. In terms of processing, phosphorylated by CDC28.

Activator of G1-specific transcription factors, MBF and SBF. Promotes both the timing of G1-specific gene transcription and cell cycle initiation. Associates with SBF- and MBF-regulated target promoters and this binding is maximal during the G1 phase, prior to maximum budding. Affects cell cycle initiation by advancing the timing of transcription of G1-specific genes. Overexpression advances the timing of SBF-dependent transcription and budding. Depletion delays both indicators of cell cycle initiation. The sequence is that of G1-specific transcription factors activator MSA1 (MSA1) from Saccharomyces cerevisiae (strain ATCC 204508 / S288c) (Baker's yeast).